A 371-amino-acid polypeptide reads, in one-letter code: Chemerin-like receptor 1 (371 aa).

Residues 1–39 lie on the Extracellular side of the membrane; it reads MEYDAYNDSGIYDDEYSDGFGYFVDLEEASPWEAKVAPV. Asparagine 7 carries an N-linked (GlcNAc...) asparagine glycan. The helical transmembrane segment at 40–62 threads the bilayer; it reads FLVVIYSLVCFLGLLGNGLVIVI. Residues 63 to 73 lie on the Cytoplasmic side of the membrane; sequence ATFKMKKTVNT. A helical transmembrane segment spans residues 74 to 95; the sequence is VWFVNLAVADFLFNIFLPMHIT. Over 96–112 the chain is Extracellular; the sequence is YAAMDYHWVFGKAMCKI. An intrachain disulfide couples cysteine 110 to cysteine 187. A helical transmembrane segment spans residues 113–133; that stretch reads SNFLLSHNMYTSVFLLTVISF. Residues 134–152 lie on the Cytoplasmic side of the membrane; sequence DRCISVLLPVWSQNHRSIR. The chain crosses the membrane as a helical span at residues 153 to 174; it reads LAYMTCSAVWVLAFFLSSPSLV. Over 175–222 the chain is Extracellular; that stretch reads FRDTANIHGKITCFNNFSLAAPESSPHPAHSQVVSTGYSRHVAVTVTR. An N-linked (GlcNAc...) asparagine glycan is attached at asparagine 190. Residues 223–243 traverse the membrane as a helical segment; sequence FLCGFLIPVFIITACYLTIVF. The Cytoplasmic segment spans residues 244 to 259; that stretch reads KLQRNRLAKNKKPFKI. A helical transmembrane segment spans residues 260-280; sequence IITIIITFFLCWCPYHTLYLL. Residues 281 to 298 are Extracellular-facing; that stretch reads ELHHTAVPSSVFSLGLPL. A helical transmembrane segment spans residues 299–318; that stretch reads ATAVAIANSCMNPILYVFMG. Over 319–371 the chain is Cytoplasmic; the sequence is HDFRKFKVALFSRLANALSEDTGPSSYPSHRSFTKMSSLNEKASVNEKETSTL. Serine 337 is modified (phosphoserine). Phosphothreonine is present on threonine 340. A phosphoserine mark is found at serine 347, serine 350, and serine 356. Position 370 is a phosphothreonine (threonine 370).

It belongs to the chemokine-like receptor (CMKLR) family. Expressed in the differentiated adipocytes (at protein level). Ubiquitous. Highly expressed in adipose tissue and immature plasmacytoid dendritic cells (DCs) and at lower levels in myeloid DCs, macrophages, and NK cells. Expressed on macrophages isolated from different tissues, including peritoneal cavities, pleural cavities and spleen.

It localises to the cell membrane. In terms of biological role, receptor for the chemoattractant adipokine chemerin/RARRES2 and for the omega-3 fatty acid derived molecule resolvin E1. Interaction with RARRES2 initiates activation of G proteins G(i)/G(o) and beta-arrestin pathways inducing cellular responses via second messenger pathways such as intracellular calcium mobilization, phosphorylation of MAP kinases MAPK1/MAPK3 (ERK1/2), TYRO3, MAPK14/P38MAPK and PI3K leading to multifunctional effects, like, reduction of immune responses, enhancing of adipogenesis and angionesis. Resolvin E1 down-regulates cytokine production in macrophages by reducing the activation of MAPK1/3 (ERK1/2) and NF-kappa-B. Positively regulates adipogenesis and adipocyte metabolism. The protein is Chemerin-like receptor 1 (Cmklr1) of Mus musculus (Mouse).